A 330-amino-acid chain; its full sequence is Ketol-acid reductoisomerase (NADP(+)) (330 aa).

The KARI N-terminal Rossmann domain maps to 2 to 181; it reads MEKYHETDAD…GATRAVVLET (180 aa). Residues 25–28, R48, S52, and 82–85 each bind NADP(+); these read YGSQ and DENQ. H107 is an active-site residue. An NADP(+)-binding site is contributed by G133. The region spanning 182 to 327 is the KARI C-terminal knotted domain; that stretch reads TFREETETDL…SELRAMMPQF (146 aa). Residues D190, E194, E226, and E230 each contribute to the Mg(2+) site. S251 is a binding site for substrate.

This sequence belongs to the ketol-acid reductoisomerase family. It depends on Mg(2+) as a cofactor.

It carries out the reaction (2R)-2,3-dihydroxy-3-methylbutanoate + NADP(+) = (2S)-2-acetolactate + NADPH + H(+). The enzyme catalyses (2R,3R)-2,3-dihydroxy-3-methylpentanoate + NADP(+) = (S)-2-ethyl-2-hydroxy-3-oxobutanoate + NADPH + H(+). The protein operates within amino-acid biosynthesis; L-isoleucine biosynthesis; L-isoleucine from 2-oxobutanoate: step 2/4. It participates in amino-acid biosynthesis; L-valine biosynthesis; L-valine from pyruvate: step 2/4. Involved in the biosynthesis of branched-chain amino acids (BCAA). Catalyzes an alkyl-migration followed by a ketol-acid reduction of (S)-2-acetolactate (S2AL) to yield (R)-2,3-dihydroxy-isovalerate. In the isomerase reaction, S2AL is rearranged via a Mg-dependent methyl migration to produce 3-hydroxy-3-methyl-2-ketobutyrate (HMKB). In the reductase reaction, this 2-ketoacid undergoes a metal-dependent reduction by NADPH to yield (R)-2,3-dihydroxy-isovalerate. The chain is Ketol-acid reductoisomerase (NADP(+)) from Methanocorpusculum labreanum (strain ATCC 43576 / DSM 4855 / Z).